Consider the following 621-residue polypeptide: Lamin-C (621 aa).

The interval 1–47 is disordered; it reads MSARRVTLNTRVSRASTSTPVGGASTSSRVGATSPTSPTRTSRQQEK. The interval 1–47 is head; the sequence is MSARRVTLNTRVSRASTSTPVGGASTSSRVGATSPTSPTRTSRQQEK. Residues 7–31 show a composition bias toward polar residues; that stretch reads TLNTRVSRASTSTPVGGASTSSRVG. The segment covering 33-42 has biased composition (low complexity); sequence TSPTSPTRTS. Position 34 is a phosphoserine (serine 34). The IF rod domain maps to 46–402; sequence EKEELQHLND…KLLCGEERRL (357 aa). Residues 47–85 are coil 1A; sequence KEELQHLNDRLACYIDRMRNLENENSRLTQELNLAQDTV. Residues 86 to 95 form a linker 1 region; sequence NRETSNLKAV. The coil 1B stretch occupies residues 96 to 233; the sequence is YEKELAAARK…QVHTQELTET (138 aa). Residues 234 to 257 are linker 2; the sequence is RSRRQIEISEIDGRLSRQYEAKLQ. Positions 258–403 are coil 2; that stretch reads QSLQELRDQY…LLCGEERRLN (146 aa). The tract at residues 404–458 is disordered; sequence IESPGRPTTDSGISSNGSHLTASASSRSGRVTPSGRRSATPGISGSSAVKRRRTV. The segment at 404–621 is tail; sequence IESPGRPTTD…GVRSLFSLLF (218 aa). Phosphoserine occurs at positions 406 and 441. Residues 409 to 450 show a composition bias toward polar residues; the sequence is RPTTDSGISSNGSHLTASASSRSGRVTPSGRRSATPGISGSS. Threonine 443 carries the post-translational modification Phosphothreonine. The Nuclear localization signal motif lies at 453 to 458; the sequence is KRRRTV. The LTD domain occupies 468–582; sequence SEYSVNAAAK…EDVASYDRVR (115 aa). A disordered region spans residues 585–605; the sequence is VSSHTSRHRSSGTPSTGFTLG.

The protein belongs to the intermediate filament family. As to quaternary structure, interacts with MAN1. First detected from late stage 12 in the oenocytes, abdominal segments, hindgut and posterior spiracles, with expression increasing in stage 13 (at protein level). In stage 14, also becomes detectable in the foregut (at protein level). Stage 15 shows expression in the epidermis, dorsal longitudinal trunk, pharynx, esophagus and proventriculus, with the dorsal pharyngeal musculature showing expression in late stage 15 (at protein level). In stage 16 embryos, also detected in the exit glia with increasing expression in the somatic musculature (at protein level). Also detected in the visceral mesoderm but not in the midgut or central nervous system until the end of embryogenesis (at protein level). In third instar larvae, detectable at varying levels in all cell types (at protein level). Expressed in spermatocytes (at protein level).

Its subcellular location is the nucleus. The protein localises to the nucleus lamina. In terms of biological role, lamins are components of the nuclear lamina, a fibrous layer on the nucleoplasmic side of the inner nuclear membrane, which is thought to provide a framework for the nuclear envelope and may also interact with chromatin. In spermatocytes, regulates cytokinesis during meiosis. This Drosophila melanogaster (Fruit fly) protein is Lamin-C (LamC).